Consider the following 348-residue polypeptide: Protein RecA (348 aa).

67–74 serves as a coordination point for ATP; that stretch reads GPESSGKT.

The protein belongs to the RecA family.

The protein localises to the cytoplasm. Functionally, can catalyze the hydrolysis of ATP in the presence of single-stranded DNA, the ATP-dependent uptake of single-stranded DNA by duplex DNA, and the ATP-dependent hybridization of homologous single-stranded DNAs. It interacts with LexA causing its activation and leading to its autocatalytic cleavage. This is Protein RecA from Kineococcus radiotolerans (strain ATCC BAA-149 / DSM 14245 / SRS30216).